Reading from the N-terminus, the 281-residue chain is Kinetochore-associated protein NSL1 homolog (281 aa).

Ser4 is subject to Phosphoserine. Thr244 bears the Phosphothreonine mark.

Component of the MIS12 complex composed of MIS12, DSN1, NSL1/DC8 and PMF1. Interacts with KNL1.

It localises to the nucleus. Its subcellular location is the chromosome. The protein localises to the centromere. The protein resides in the kinetochore. Part of the MIS12 complex which is required for normal chromosome alignment and segregation and kinetochore formation during mitosis. The chain is Kinetochore-associated protein NSL1 homolog (NSL1) from Homo sapiens (Human).